The sequence spans 172 residues: uncharacterized protein (172 aa).

A run of 4 helical transmembrane segments spans residues 1 to 21, 41 to 61, 72 to 92, and 136 to 156; these read MLFI…SLSI, NSTL…IEAN, QIGL…IYEL, and FCQA…ILAV.

Its subcellular location is the cell membrane. This is an uncharacterized protein from Haemophilus influenzae (strain ATCC 51907 / DSM 11121 / KW20 / Rd).